The chain runs to 118 residues: Small ribosomal subunit protein uS13 (118 aa).

The interval 91–118 (HRRSLPVRGQRTKTNARTRKGPRKPIRK) is disordered.

Belongs to the universal ribosomal protein uS13 family. Part of the 30S ribosomal subunit. Forms a loose heterodimer with protein S19. Forms two bridges to the 50S subunit in the 70S ribosome.

Functionally, located at the top of the head of the 30S subunit, it contacts several helices of the 16S rRNA. In the 70S ribosome it contacts the 23S rRNA (bridge B1a) and protein L5 of the 50S subunit (bridge B1b), connecting the 2 subunits; these bridges are implicated in subunit movement. Contacts the tRNAs in the A and P-sites. The sequence is that of Small ribosomal subunit protein uS13 from Marinomonas sp. (strain MWYL1).